The chain runs to 184 residues: Major urinary protein 3 (184 aa).

A signal peptide spans 1-22 (MKLLLPLLLLLCLELTLVCIHA). A glycan (N-linked (GlcNAc...) asparagine) is linked at asparagine 66. Cysteine 86 and cysteine 179 are joined by a disulfide.

Belongs to the calycin superfamily. Lipocalin family. Glycosylated. As to expression, abundant in the urine of adult male mice but absent from that of females.

The protein localises to the secreted. Its function is as follows. Binds pheromones that are released from drying urine of males. These pheromones affect the sexual behavior of females. This is Major urinary protein 3 (Mup3) from Mus musculus (Mouse).